A 420-amino-acid polypeptide reads, in one-letter code: MVSKALLRLVSAVNRRRMKLLLGIALLAYVASVWGNFVNMRSIQENGELKIESKIEEMVEPLREKIRDLEKSFTQKYPPVKFLSEKDRKRILITGGAGFVGSHLTDKLMMDGHEVTVVDNFFTGRKRNVEHWIGHENFELINHDVVEPLYIEVDQIYHLASPASPPNYMYNPIKTLKTNTIGTLNMLGLAKRVGARLLLASTSEVYGDPEVHPQSEDYWGHVNPIGPRACYDEGKRVAETMCYAYMKQEGVEVRVARIFNTFGPRMHMNDGRVVSNFILQALQGEPLTVYGSGSQTRAFQYVSDLVNGLVALMNSNVSSPVNLGNPEEHTILEFAQLIKNLVGSGSEIQFLSEAQDDPQKRKPDIKKAKLMLGWEPVVPLEEGLNKAIHYFRKELEYQANNQYIPKPKPARIKKGRTRHS.

Met1 carries the post-translational modification N-acetylmethionine. At 1 to 19 the chain is on the cytoplasmic side; it reads MVSKALLRLVSAVNRRRMK. Residues 20 to 40 traverse the membrane as a helical; Signal-anchor for type II membrane protein segment; it reads LLLGIALLAYVASVWGNFVNM. Residues 41-420 lie on the Lumenal side of the membrane; it reads RSIQENGELK…RIKKGRTRHS (380 aa). Phosphothreonine is present on Thr94. Positions 98, 99, 100, 119, 120, 122, 123, 124, 144, and 145 each coordinate NAD(+). The UDP-alpha-D-glucuronate site is built by Leu149 and Tyr150. Leu159 and Ser161 together coordinate NAD(+). Lys177 is a binding site for UDP-alpha-D-glucuronate. Thr178 is a binding site for NAD(+). UDP-alpha-D-glucuronate is bound by residues Asn185, Gly188, Lys191, and Arg192. Residues Ala200, Tyr231, and Lys235 each contribute to the NAD(+) site. Tyr231 serves as the catalytic Proton acceptor. Positions 245, 248, and 249 each coordinate UDP-alpha-D-glucuronate. NAD(+) is bound by residues Thr261, His267, and Arg272. The N-linked (GlcNAc...) asparagine glycan is linked to Asn316.

Belongs to the NAD(P)-dependent epimerase/dehydratase family. UDP-glucuronic acid decarboxylase subfamily. Homodimer and homotetramer. Interacts with AKT1. NAD(+) is required as a cofactor.

It is found in the golgi apparatus. The protein resides in the golgi stack membrane. It carries out the reaction UDP-alpha-D-glucuronate + H(+) = UDP-alpha-D-xylose + CO2. Its pathway is nucleotide-sugar biosynthesis; UDP-alpha-D-xylose biosynthesis; UDP-alpha-D-xylose from UDP-alpha-D-glucuronate: step 1/1. In terms of biological role, catalyzes the NAD-dependent decarboxylation of UDP-glucuronic acid to UDP-xylose. Necessary for the biosynthesis of the core tetrasaccharide in glycosaminoglycan biosynthesis. The polypeptide is UDP-glucuronic acid decarboxylase 1 (Homo sapiens (Human)).